A 342-amino-acid polypeptide reads, in one-letter code: S-adenosylmethionine:tRNA ribosyltransferase-isomerase (342 aa).

Belongs to the QueA family. In terms of assembly, monomer.

It is found in the cytoplasm. The enzyme catalyses 7-aminomethyl-7-carbaguanosine(34) in tRNA + S-adenosyl-L-methionine = epoxyqueuosine(34) in tRNA + adenine + L-methionine + 2 H(+). It functions in the pathway tRNA modification; tRNA-queuosine biosynthesis. Functionally, transfers and isomerizes the ribose moiety from AdoMet to the 7-aminomethyl group of 7-deazaguanine (preQ1-tRNA) to give epoxyqueuosine (oQ-tRNA). The chain is S-adenosylmethionine:tRNA ribosyltransferase-isomerase from Streptococcus pneumoniae serotype 4 (strain ATCC BAA-334 / TIGR4).